The chain runs to 1009 residues: Translation initiation factor IF-2 (1009 aa).

Residues 1 to 415 (MSDENENGRP…EREKEKRRGG (415 aa)) are disordered. Basic and acidic residues predominate over residues 94–110 (EELRARQRVVDAAREAQ). Low complexity predominate over residues 111–121 (ARQVAEQAAAE). A compositionally biased stretch (basic and acidic residues) spans 122 to 136 (ARARAAQEAAQREAA). Low complexity predominate over residues 137-146 (AKAAAERAAA). Pro residues predominate over residues 147–174 (APPPVAQAPAAPAPAAPVTPPPAAPQAP). Residues 175–189 (RPVAQAPVAPSAPRQ) show a composition bias toward low complexity. Composition is skewed to basic and acidic residues over residues 208–218 (EPSRDRRDDRP) and 251–287 (PRPE…RPQG). Positions 311–320 (GGPPRGPRPG) are enriched in pro residues. Composition is skewed to basic and acidic residues over residues 346–358 (MDRR…DRRK) and 403–415 (RARE…RRGG). One can recognise a tr-type G domain in the interval 505–675 (LRPPVVTIMG…LLQAEVLDLK (171 aa)). Positions 514–521 (GHVDHGKT) are G1. Residue 514–521 (GHVDHGKT) coordinates GTP. The interval 539 to 543 (GITQH) is G2. The segment at 561-564 (DTPG) is G3. Residues 561–565 (DTPGH) and 615–618 (NKMD) contribute to the GTP site. The segment at 615–618 (NKMD) is G4. The segment at 651-653 (SAK) is G5.

It belongs to the TRAFAC class translation factor GTPase superfamily. Classic translation factor GTPase family. IF-2 subfamily.

The protein resides in the cytoplasm. Its function is as follows. One of the essential components for the initiation of protein synthesis. Protects formylmethionyl-tRNA from spontaneous hydrolysis and promotes its binding to the 30S ribosomal subunits. Also involved in the hydrolysis of GTP during the formation of the 70S ribosomal complex. The sequence is that of Translation initiation factor IF-2 from Caulobacter vibrioides (strain ATCC 19089 / CIP 103742 / CB 15) (Caulobacter crescentus).